We begin with the raw amino-acid sequence, 510 residues long: Aspartate kinase FUB3 (510 aa).

ACT domains follow at residues 372 to 440 (ILSN…VLPD) and 446 to 510 (LVGA…KNAM).

This sequence belongs to the aspartokinase family.

It catalyses the reaction L-aspartate + ATP = 4-phospho-L-aspartate + ADP. The protein operates within mycotoxin biosynthesis. In terms of biological role, aspartate kinase; part of the gene cluster that mediates the biosynthesis of fusaric acid, a mycotoxin with low to moderate toxicity to animals and humans, but with high phytotoxic properties. L-aspartate is suggested as fusaric acid amino acid precursor that is activated and further processed to O-acetyl-L-homoserine by cluster enzymes aspartate kinase FUB3 and homoserine O-acetyltransferase FUB5, as well as enzymes of the primary metabolism. The polyketide synthase (PKS) FUB1 generates the triketide trans-2-hexenal which is presumptively released by the hydrolase FUB4 and linked to the NRPS-bound amino acid precursor by NAD(P)-dependent dehydrogenase FUB6. FUB1, FUB4, and the non-canonical NRPS Fub8 may form an enzyme complex. Further processing of the NRPS-bound intermediate might be carried out by FUB6 and the sulfhydrylase FUB7, enabling a spontaneous electrocyclization to close the carbon backbone of fusaric acid. Dihydrofusaric acid is likely to be released via reduction by the thioester reductase (TR) domain of FUB8 whereupon the final oxidation to fusaric acid may (also) be performed by the FMN-dependent dehydrogenase FUB9. This is Aspartate kinase FUB3 from Gibberella moniliformis (strain M3125 / FGSC 7600) (Maize ear and stalk rot fungus).